Here is a 116-residue protein sequence, read N- to C-terminus: NADH-ubiquinone oxidoreductase chain 3 (116 aa).

3 helical membrane-spanning segments follow: residues Leu4–Trp24, Phe56–Leu76, and Thr88–Ile108.

Belongs to the complex I subunit 3 family. As to quaternary structure, core subunit of respiratory chain NADH dehydrogenase (Complex I) which is composed of 45 different subunits. Interacts with TMEM186. Interacts with TMEM242.

It localises to the mitochondrion inner membrane. The catalysed reaction is a ubiquinone + NADH + 5 H(+)(in) = a ubiquinol + NAD(+) + 4 H(+)(out). Core subunit of the mitochondrial membrane respiratory chain NADH dehydrogenase (Complex I) which catalyzes electron transfer from NADH through the respiratory chain, using ubiquinone as an electron acceptor. Essential for the catalytic activity of complex I. The protein is NADH-ubiquinone oxidoreductase chain 3 of Didelphis virginiana (North American opossum).